The following is a 342-amino-acid chain: uncharacterized protein (342 aa).

This sequence belongs to the cycloisomerase 2 family.

This is an uncharacterized protein from Staphylococcus aureus (strain N315).